A 1114-amino-acid polypeptide reads, in one-letter code: Isoleucine--tRNA ligase (1114 aa).

Residues 61 to 71 (PTANGQPGTHH) carry the 'HIGH' region motif. The 'KMSKS' region signature appears at 640–644 (KMSKH). K643 contacts ATP.

This sequence belongs to the class-I aminoacyl-tRNA synthetase family. IleS type 2 subfamily. As to quaternary structure, monomer. The cofactor is Zn(2+).

It is found in the cytoplasm. It carries out the reaction tRNA(Ile) + L-isoleucine + ATP = L-isoleucyl-tRNA(Ile) + AMP + diphosphate. Catalyzes the attachment of isoleucine to tRNA(Ile). As IleRS can inadvertently accommodate and process structurally similar amino acids such as valine, to avoid such errors it has two additional distinct tRNA(Ile)-dependent editing activities. One activity is designated as 'pretransfer' editing and involves the hydrolysis of activated Val-AMP. The other activity is designated 'posttransfer' editing and involves deacylation of mischarged Val-tRNA(Ile). The chain is Isoleucine--tRNA ligase from Cutibacterium acnes (strain DSM 16379 / KPA171202) (Propionibacterium acnes).